A 210-amino-acid chain; its full sequence is Potassium-transporting ATPase KdpC subunit (210 aa).

Residues 13–33 traverse the membrane as a helical segment; sequence LVTLVLLLVCGLAYPLILTGI.

Belongs to the KdpC family. In terms of assembly, the system is composed of three essential subunits: KdpA, KdpB and KdpC.

Its subcellular location is the cell membrane. Its function is as follows. Part of the high-affinity ATP-driven potassium transport (or Kdp) system, which catalyzes the hydrolysis of ATP coupled with the electrogenic transport of potassium into the cytoplasm. This subunit acts as a catalytic chaperone that increases the ATP-binding affinity of the ATP-hydrolyzing subunit KdpB by the formation of a transient KdpB/KdpC/ATP ternary complex. This chain is Potassium-transporting ATPase KdpC subunit, found in Clostridium kluyveri (strain ATCC 8527 / DSM 555 / NBRC 12016 / NCIMB 10680 / K1).